The following is a 354-amino-acid chain: S-adenosylmethionine:tRNA ribosyltransferase-isomerase (354 aa).

Belongs to the QueA family. Monomer.

The protein resides in the cytoplasm. It catalyses the reaction 7-aminomethyl-7-carbaguanosine(34) in tRNA + S-adenosyl-L-methionine = epoxyqueuosine(34) in tRNA + adenine + L-methionine + 2 H(+). It participates in tRNA modification; tRNA-queuosine biosynthesis. Functionally, transfers and isomerizes the ribose moiety from AdoMet to the 7-aminomethyl group of 7-deazaguanine (preQ1-tRNA) to give epoxyqueuosine (oQ-tRNA). In Salmonella typhi, this protein is S-adenosylmethionine:tRNA ribosyltransferase-isomerase.